The sequence spans 75 residues: Neuropeptide-like protein 31 (75 aa).

The signal sequence occupies residues 1–22 (MISTSSILVLVVLLACFMAANA). Tyrosine amide is present on residues Y29, Y39, Y49, Y56, and Y64. Tryptophan amide is present on W73.

Belongs to the YARP (YGGW-amide related peptide) family. Expressed in hypoderm.

It localises to the secreted. Antimicrobial peptides that have antifungal activity against D.coniospora. Has weak antibacterial activity against Gram-positive bacteria M.luteus and Gram-negative E.coli. The chain is Neuropeptide-like protein 31 (nlp-31) from Caenorhabditis elegans.